The primary structure comprises 1059 residues: Ceruloplasmin (1059 aa).

The signal sequence occupies residues 1 to 19; that stretch reads MKFLLLSALLFLHSSLAWT. 6 Plastocyanin-like domains span residues 20–199, 208–356, 369–554, 564–712, 724–894, and 902–1055; these read REKH…LILC, KEEN…VRDC, HVRH…MKIC, RQKD…VNQC, GERT…LIVC, and FNPK…PNQE. Residues tyrosine 55, glycine 64, and tyrosine 67 each coordinate Na(+). Residues histidine 120 and histidine 122 each coordinate Cu(2+). Histidine 120 is a binding site for O2. Lysine 128 is a Ca(2+) binding site. Asparagine 138 carries an N-linked (GlcNAc...) asparagine glycan. 3 residues coordinate Ca(2+): glutamine 143, aspartate 146, and aspartate 147. Residues cysteine 173 and cysteine 199 are joined by a disulfide bond. 2 residues coordinate Cu(2+): histidine 179 and histidine 181. Histidine 179 contributes to the O2 binding site. Asparagine 226 is a glycosylation site (N-linked (GlcNAc...) asparagine). Serine 255 lines the Na(+) pocket. Residues cysteine 275 and cysteine 356 are joined by a disulfide bond. Cu(2+) is bound by residues histidine 294, cysteine 337, and histidine 342. An N-linked (GlcNAc...) asparagine glycan is attached at asparagine 396. The Na(+) site is built by phenylalanine 407, glycine 416, and tyrosine 419. A disulfide bond links cysteine 528 and cysteine 554. A glycan (N-linked (GlcNAc...) asparagine) is linked at asparagine 582. Na(+) is bound at residue serine 611. Cysteine 631 and cysteine 712 are oxidised to a cystine. Cu(2+)-binding residues include histidine 650, cysteine 693, histidine 698, and methionine 703. The active-site Nucleophile; for glutathione peroxidase activity is cysteine 693. A glycan (N-linked (GlcNAc...) asparagine) is linked at asparagine 756. Na(+) contacts are provided by phenylalanine 761, glycine 770, and tyrosine 773. Residues cysteine 868 and cysteine 894 are joined by a disulfide bond. Asparagine 920 is a glycosylation site (N-linked (GlcNAc...) asparagine). Serine 949 is a binding site for Na(+). Residues histidine 988, histidine 991, histidine 993, histidine 1033, cysteine 1034, histidine 1035, histidine 1039, and methionine 1044 each contribute to the Cu(2+) site. Residues histidine 991 and histidine 993 each contribute to the O2 site. Histidine 1035 contributes to the O2 binding site.

Belongs to the multicopper oxidase family. Found in a complex with MPO and LTF; interacts directly with MPO and LTF, which allows Fe(3+) incorporation into LTF, activation of CP ferroxidase activity and protection of CP antioxidant properties by MPO. Cu(2+) serves as cofactor. In terms of tissue distribution, synthesized in liver and secreted into the plasma. Also choroid plexus, yolk sac, placenta, and testis; not in stomach and small intestine. Fetal lung and liver.

It localises to the secreted. The enzyme catalyses 4 Fe(2+) + O2 + 4 H(+) = 4 Fe(3+) + 2 H2O. It catalyses the reaction 4 Cu(+) + O2 + 4 H(+) = 4 Cu(2+) + 2 H2O. It carries out the reaction a hydroperoxide + 2 glutathione = an alcohol + glutathione disulfide + H2O. The catalysed reaction is 4 nitric oxide + O2 + 2 H2O = 4 nitrite + 4 H(+). The enzyme catalyses 2 glutathione + H2O2 = glutathione disulfide + 2 H2O. Its function is as follows. Multifunctional blue, copper-binding (6-7 atoms per molecule) glycoprotein. It has ferroxidase activity oxidizing Fe(2+) to Fe(3+) without releasing radical oxygen species. It is involved in iron transport across the cell membrane. Copper ions provide a large number of enzymatic activites. Oxidizes highly toxic ferrous ions to the ferric state for further incorporation onto apo-transferrins, catalyzes Cu(+) oxidation and promotes the oxidation of biogenic amines such as norepinephrin and serotonin. Provides Cu(2+) ions for the ascorbate-mediated deaminase degradation of the heparan sulfate chains of GPC1. Has glutathione peroxidase-like activity, can remove both hydrogen peroxide and lipid hydroperoxide in the presence of thiols. Also shows NO-oxidase and NO2 synthase activities that determine endocrine NO homeostasis. The sequence is that of Ceruloplasmin (Cp) from Rattus norvegicus (Rat).